Reading from the N-terminus, the 479-residue chain is Trigger factor (479 aa).

Residues 174-261 enclose the PPIase FKBP-type domain; sequence GDIAVVSFSG…LKELKTRELP (88 aa). The tract at residues 438-479 is disordered; sequence VLESEAKTSKPAAKSKGSKTKSTKTKTNKANTEKPASDKSKS. Positions 453 to 464 are enriched in basic residues; it reads KGSKTKSTKTKT. Residues 468-479 show a composition bias toward basic and acidic residues; it reads NTEKPASDKSKS.

It belongs to the FKBP-type PPIase family. Tig subfamily.

Its subcellular location is the cytoplasm. The catalysed reaction is [protein]-peptidylproline (omega=180) = [protein]-peptidylproline (omega=0). Involved in protein export. Acts as a chaperone by maintaining the newly synthesized protein in an open conformation. Functions as a peptidyl-prolyl cis-trans isomerase. The chain is Trigger factor from Prochlorococcus marinus (strain MIT 9313).